The following is a 331-amino-acid chain: Ketol-acid reductoisomerase (NADP(+)) (331 aa).

Residues 2–182 (AQLFYDTDAD…GGTRAGILET (181 aa)) form the KARI N-terminal Rossmann domain. Residues 25 to 28 (YGSQ), S51, S53, and 83 to 86 (DEFQ) each bind NADP(+). H108 is a catalytic residue. Residue G134 coordinates NADP(+). In terms of domain architecture, KARI C-terminal knotted spans 183–328 (NFKEETETDL…KGLRSMFSWL (146 aa)). D191, E195, E227, and E231 together coordinate Mg(2+). A substrate-binding site is contributed by S252.

Belongs to the ketol-acid reductoisomerase family. It depends on Mg(2+) as a cofactor.

The enzyme catalyses (2R)-2,3-dihydroxy-3-methylbutanoate + NADP(+) = (2S)-2-acetolactate + NADPH + H(+). The catalysed reaction is (2R,3R)-2,3-dihydroxy-3-methylpentanoate + NADP(+) = (S)-2-ethyl-2-hydroxy-3-oxobutanoate + NADPH + H(+). The protein operates within amino-acid biosynthesis; L-isoleucine biosynthesis; L-isoleucine from 2-oxobutanoate: step 2/4. It participates in amino-acid biosynthesis; L-valine biosynthesis; L-valine from pyruvate: step 2/4. Functionally, involved in the biosynthesis of branched-chain amino acids (BCAA). Catalyzes an alkyl-migration followed by a ketol-acid reduction of (S)-2-acetolactate (S2AL) to yield (R)-2,3-dihydroxy-isovalerate. In the isomerase reaction, S2AL is rearranged via a Mg-dependent methyl migration to produce 3-hydroxy-3-methyl-2-ketobutyrate (HMKB). In the reductase reaction, this 2-ketoacid undergoes a metal-dependent reduction by NADPH to yield (R)-2,3-dihydroxy-isovalerate. The protein is Ketol-acid reductoisomerase (NADP(+)) of Synechococcus sp. (strain WH7803).